Consider the following 494-residue polypeptide: ATP synthase subunit beta (494 aa).

177 to 184 (GGAGVGKT) contacts ATP.

This sequence belongs to the ATPase alpha/beta chains family. F-type ATPases have 2 components, CF(1) - the catalytic core - and CF(0) - the membrane proton channel. CF(1) has five subunits: alpha(3), beta(3), gamma(1), delta(1), epsilon(1). CF(0) has three main subunits: a(1), b(2) and c(9-12). The alpha and beta chains form an alternating ring which encloses part of the gamma chain. CF(1) is attached to CF(0) by a central stalk formed by the gamma and epsilon chains, while a peripheral stalk is formed by the delta and b chains.

The protein resides in the cell membrane. It catalyses the reaction ATP + H2O + 4 H(+)(in) = ADP + phosphate + 5 H(+)(out). In terms of biological role, produces ATP from ADP in the presence of a proton gradient across the membrane. The catalytic sites are hosted primarily by the beta subunits. This chain is ATP synthase subunit beta, found in Bifidobacterium adolescentis (strain ATCC 15703 / DSM 20083 / NCTC 11814 / E194a).